An 815-amino-acid chain; its full sequence is Probable beta-glucosidase G (815 aa).

The first 20 residues, 1–20 (MASIAHLVVSGLLAATAVNG), serve as a signal peptide directing secretion. 4 N-linked (GlcNAc...) asparagine glycosylation sites follow: asparagine 40, asparagine 58, asparagine 229, and asparagine 276. Aspartate 304 is a catalytic residue. N-linked (GlcNAc...) asparagine glycosylation is found at asparagine 343, asparagine 350, asparagine 402, asparagine 507, asparagine 563, asparagine 584, asparagine 623, asparagine 662, and asparagine 715.

This sequence belongs to the glycosyl hydrolase 3 family.

The protein localises to the secreted. It carries out the reaction Hydrolysis of terminal, non-reducing beta-D-glucosyl residues with release of beta-D-glucose.. Its pathway is glycan metabolism; cellulose degradation. In terms of biological role, beta-glucosidases are one of a number of cellulolytic enzymes involved in the degradation of cellulosic biomass. Catalyzes the last step releasing glucose from the inhibitory cellobiose. The polypeptide is Probable beta-glucosidase G (bglG) (Aspergillus flavus (strain ATCC 200026 / FGSC A1120 / IAM 13836 / NRRL 3357 / JCM 12722 / SRRC 167)).